The primary structure comprises 180 residues: ATP synthase subunit delta 2 (180 aa).

The protein belongs to the ATPase delta chain family. In terms of assembly, F-type ATPases have 2 components, F(1) - the catalytic core - and F(0) - the membrane proton channel. F(1) has five subunits: alpha(3), beta(3), gamma(1), delta(1), epsilon(1). F(0) has three main subunits: a(1), b(2) and c(10-14). The alpha and beta chains form an alternating ring which encloses part of the gamma chain. F(1) is attached to F(0) by a central stalk formed by the gamma and epsilon chains, while a peripheral stalk is formed by the delta and b chains.

Its subcellular location is the cell inner membrane. Its function is as follows. F(1)F(0) ATP synthase produces ATP from ADP in the presence of a proton or sodium gradient. F-type ATPases consist of two structural domains, F(1) containing the extramembraneous catalytic core and F(0) containing the membrane proton channel, linked together by a central stalk and a peripheral stalk. During catalysis, ATP synthesis in the catalytic domain of F(1) is coupled via a rotary mechanism of the central stalk subunits to proton translocation. This protein is part of the stalk that links CF(0) to CF(1). It either transmits conformational changes from CF(0) to CF(1) or is implicated in proton conduction. The sequence is that of ATP synthase subunit delta 2 from Vibrio campbellii (strain ATCC BAA-1116).